A 320-amino-acid polypeptide reads, in one-letter code: Malate dehydrogenase (320 aa).

NAD(+) is bound by residues 10–15 (GAGQIG) and Asp34. Arg83 and Arg89 together coordinate substrate. Residues Asn96 and 119–121 (ITN) contribute to the NAD(+) site. Substrate-binding residues include Asn121 and Arg152. His176 (proton acceptor) is an active-site residue.

This sequence belongs to the LDH/MDH superfamily. MDH type 3 family.

The catalysed reaction is (S)-malate + NAD(+) = oxaloacetate + NADH + H(+). Its function is as follows. Catalyzes the reversible oxidation of malate to oxaloacetate. The protein is Malate dehydrogenase of Methylorubrum populi (strain ATCC BAA-705 / NCIMB 13946 / BJ001) (Methylobacterium populi).